The chain runs to 260 residues: ATP synthase subunit a (260 aa).

7 consecutive transmembrane segments (helical) span residues 29 to 49 (FSFTNSSLFMLLTLSFFLLLI), 95 to 115 (FFPCILVTFLFLLFCNLQGMI), 124 to 144 (HFLITLALSFSIFIGITIVGF), 151 to 171 (FFSFLLPAGVPLPLAPFLVLL), 191 to 211 (MMAGHSLVKILSGFAWTMLCM), 213 to 233 (EIFYFIGALGPLFIVLALTGL), and 237 to 257 (VAILQAYVFTILICIYLNDAI).

The protein belongs to the ATPase A chain family. F-type ATPases have 2 components, CF(1) - the catalytic core - and CF(0) - the membrane proton channel. CF(1) has five subunits: alpha(3), beta(3), gamma(1), delta(1), epsilon(1). CF(0) has three main subunits: a, b and c.

Its subcellular location is the mitochondrion inner membrane. Mitochondrial membrane ATP synthase (F(1)F(0) ATP synthase or Complex V) produces ATP from ADP in the presence of a proton gradient across the membrane which is generated by electron transport complexes of the respiratory chain. F-type ATPases consist of two structural domains, F(1) - containing the extramembraneous catalytic core and F(0) - containing the membrane proton channel, linked together by a central stalk and a peripheral stalk. During catalysis, ATP synthesis in the catalytic domain of F(1) is coupled via a rotary mechanism of the central stalk subunits to proton translocation. Key component of the proton channel; it may play a direct role in the translocation of protons across the membrane. This chain is ATP synthase subunit a (ATP6), found in Brassica napus (Rape).